Consider the following 127-residue polypeptide: Large ribosomal subunit protein bL17 (127 aa).

The protein belongs to the bacterial ribosomal protein bL17 family. As to quaternary structure, part of the 50S ribosomal subunit. Contacts protein L32.

This chain is Large ribosomal subunit protein bL17, found in Stenotrophomonas maltophilia (strain R551-3).